A 303-amino-acid chain; its full sequence is Proline dehydrogenase 2 (303 aa).

Lys96 lines the substrate pocket. Asp130 is an active-site residue. Met131 and Gln159 together coordinate FAD. The active site involves Arg180. Residues 183–185 (KGA) and 222–223 (TH) each bind FAD. 284–285 (RR) provides a ligand contact to substrate.

The protein belongs to the proline dehydrogenase family. It depends on FAD as a cofactor.

It carries out the reaction L-proline + a quinone = (S)-1-pyrroline-5-carboxylate + a quinol + H(+). Its pathway is amino-acid degradation; L-proline degradation into L-glutamate; L-glutamate from L-proline: step 1/2. Converts proline to delta-1-pyrroline-5-carboxylate. Important for the use of proline as a sole carbon and energy source or a sole nitrogen source. The chain is Proline dehydrogenase 2 from Bacillus subtilis (strain 168).